A 317-amino-acid chain; its full sequence is Coproporphyrinogen-III oxidase, aerobic 1 (317 aa).

The important for dimerization stretch occupies residues 38-47; that stretch reads VLRDGAIFEQ. S82 is a substrate binding site. The Proton donor role is filled by H96. Residues 98–100 and 269–274 each bind substrate; these read NYR and NGRTES. The segment at 251–286 is important for dimerization; sequence YVEFNLVYDRGTIFGLQTNGRTESILMSLPPLVRWE.

It belongs to the aerobic coproporphyrinogen-III oxidase family. As to quaternary structure, homodimer.

The protein resides in the cytoplasm. The enzyme catalyses coproporphyrinogen III + O2 + 2 H(+) = protoporphyrinogen IX + 2 CO2 + 2 H2O. The protein operates within porphyrin-containing compound metabolism; protoporphyrin-IX biosynthesis; protoporphyrinogen-IX from coproporphyrinogen-III (O2 route): step 1/1. Functionally, key enzyme in heme biosynthesis. Catalyzes the oxidative decarboxylation of propionic acid side chains of rings A and B of coproporphyrinogen III. The sequence is that of Coproporphyrinogen-III oxidase, aerobic 1 from Nostoc sp. (strain PCC 7120 / SAG 25.82 / UTEX 2576).